The following is a 396-amino-acid chain: Elongation factor Tu (396 aa).

Residues 10–206 (KPHCNIGTIG…TVDAYIPQPE (197 aa)) form the tr-type G domain. Residues 19 to 26 (GHVDHGKT) are G1. Position 19 to 26 (19 to 26 (GHVDHGKT)) interacts with GTP. Thr26 provides a ligand contact to Mg(2+). The G2 stretch occupies residues 60–64 (GITIS). Residues 81–84 (DCPG) are G3. GTP is bound by residues 81–85 (DCPGH) and 136–139 (NKVD). Residues 136 to 139 (NKVD) form a G4 region. The G5 stretch occupies residues 174 to 176 (SAL).

Belongs to the TRAFAC class translation factor GTPase superfamily. Classic translation factor GTPase family. EF-Tu/EF-1A subfamily. As to quaternary structure, monomer.

The protein resides in the cytoplasm. The enzyme catalyses GTP + H2O = GDP + phosphate + H(+). Functionally, GTP hydrolase that promotes the GTP-dependent binding of aminoacyl-tRNA to the A-site of ribosomes during protein biosynthesis. This chain is Elongation factor Tu, found in Methylocella silvestris (strain DSM 15510 / CIP 108128 / LMG 27833 / NCIMB 13906 / BL2).